Here is a 773-residue protein sequence, read N- to C-terminus: Mitochondrial inner membrane m-AAA protease component yta12 (773 aa).

The disordered stretch occupies residues 83 to 119; the sequence is FSVTSKRSQNGSSGSNSDANGRKNGQKNDDSKKKGLN. Positions 87–101 are enriched in low complexity; sequence SKRSQNGSSGSNSDA. Transmembrane regions (helical) follow at residues 126–146 and 239–259; these read VFEI…AYIL and VLAT…VIYL. ATP contacts are provided by valine 298, alanine 299, threonine 340, glycine 341, lysine 342, threonine 343, leucine 344, and histidine 479. Histidine 561 serves as a coordination point for Zn(2+). Glutamate 562 is an active-site residue. Zn(2+)-binding residues include histidine 565 and aspartate 638. The disordered stretch occupies residues 752–773; that stretch reads EYKNDHDPRNPPIPPSPQQPSA. The segment covering 761 to 773 has biased composition (pro residues); that stretch reads NPPIPPSPQQPSA.

This sequence in the N-terminal section; belongs to the AAA ATPase family. It in the C-terminal section; belongs to the peptidase M41 family. As to quaternary structure, component of the m-AAA protease complex. It depends on Zn(2+) as a cofactor.

It is found in the mitochondrion membrane. The catalysed reaction is ATP + H2O = ADP + phosphate + H(+). Catalytic component of the m-AAA protease, a protease that plays a key role in proteostasis of inner mitochondrial membrane proteins. Possesses both ATPase and protease activities: the ATPase activity is required to unfold substrates, threading them into the internal proteolytic cavity for hydrolysis into small peptide fragments. The complex is necessary for the assembly of mitochondrial respiratory chain and ATPase complexes. The m-AAA protease carries out protein quality control in the inner membrane of the mitochondria by mediating degradation of mistranslated or misfolded polypeptides. It also mediates protein maturation of the mitochondrial ribosomal subunit mrpl32/bL32m by catalyzing the cleavage of the presequence of mrpl32/bL32m prior to assembly into the mitochondrial ribosome. Also acts as a membrane protein dislocase: required to dislocate moderately hydrophobic transmembrane segments from the membrane. This Schizosaccharomyces pombe (strain 972 / ATCC 24843) (Fission yeast) protein is Mitochondrial inner membrane m-AAA protease component yta12 (yta12).